We begin with the raw amino-acid sequence, 407 residues long: Probable tRNA pseudouridine synthase D (407 aa).

The Nucleophile role is filled by Asp81. The TRUD domain maps to 151–372 (GFPNYFGIQR…PGGRRELLIR (222 aa)).

Belongs to the pseudouridine synthase TruD family.

The enzyme catalyses uridine(13) in tRNA = pseudouridine(13) in tRNA. Functionally, could be responsible for synthesis of pseudouridine from uracil-13 in transfer RNAs. The polypeptide is Probable tRNA pseudouridine synthase D (Pyrococcus furiosus (strain ATCC 43587 / DSM 3638 / JCM 8422 / Vc1)).